The sequence spans 232 residues: Ureidoacrylate amidohydrolase RutB (232 aa).

The active-site Proton acceptor is the Asp-26. Lys-135 is a catalytic residue. Cys-168 serves as the catalytic Nucleophile.

This sequence belongs to the isochorismatase family. RutB subfamily.

The enzyme catalyses (Z)-3-ureidoacrylate + H2O + H(+) = (Z)-3-aminoacrylate + NH4(+) + CO2. It catalyses the reaction (Z)-3-ureidoacrylate + H2O = (Z)-3-aminoacrylate + carbamate + H(+). The catalysed reaction is (Z)-2-methylureidoacrylate + H2O + H(+) = (Z)-2-methylaminoacrylate + NH4(+) + CO2. In terms of biological role, hydrolyzes ureidoacrylate to form aminoacrylate and carbamate. The carbamate hydrolyzes spontaneously, thereby releasing one of the nitrogen atoms of the pyrimidine ring as ammonia and one of its carbon atoms as CO2. The polypeptide is Ureidoacrylate amidohydrolase RutB (Cronobacter sakazakii (strain ATCC BAA-894) (Enterobacter sakazakii)).